The primary structure comprises 171 residues: Peptide methionine sulfoxide reductase MsrA (171 aa).

Residue cysteine 13 is part of the active site.

Belongs to the MsrA Met sulfoxide reductase family.

The catalysed reaction is L-methionyl-[protein] + [thioredoxin]-disulfide + H2O = L-methionyl-(S)-S-oxide-[protein] + [thioredoxin]-dithiol. It catalyses the reaction [thioredoxin]-disulfide + L-methionine + H2O = L-methionine (S)-S-oxide + [thioredoxin]-dithiol. Has an important function as a repair enzyme for proteins that have been inactivated by oxidation. Catalyzes the reversible oxidation-reduction of methionine sulfoxide in proteins to methionine. This Mycobacterium ulcerans (strain Agy99) protein is Peptide methionine sulfoxide reductase MsrA.